The following is a 745-amino-acid chain: Aminopeptidase NAALADL1 (745 aa).

At 1-6 (MHWAKI) the chain is on the cytoplasmic side. Residues 7–28 (LGVGIGAAALLGLGIILGHFAI) traverse the membrane as a helical; Signal-anchor for type II membrane protein segment. At 29–745 (PKATEPLASS…AATLQPVTDL (717 aa)) the chain is on the extracellular side. N-linked (GlcNAc...) asparagine glycosylation is found at N128, N141, and N235. Positions 263 and 266 each coordinate Ca(2+). 3 N-linked (GlcNAc...) asparagine glycosylation sites follow: N279, N304, and N350. An intrachain disulfide couples C301 to C318. Positions 373 and 383 each coordinate Zn(2+). The active-site Proton donor/acceptor is the E421. Residue E422 participates in Zn(2+) binding. E430 and E433 together coordinate Ca(2+). D450 provides a ligand contact to Zn(2+). N456 and N497 each carry an N-linked (GlcNAc...) asparagine glycan. Residue H550 participates in Zn(2+) binding. N593 and N620 each carry an N-linked (GlcNAc...) asparagine glycan.

This sequence belongs to the peptidase M28 family. M28B subfamily. In terms of assembly, homodimer. It depends on Zn(2+) as a cofactor. Post-translationally, N-glycosylated. In terms of tissue distribution, detected on apical villi on the brush border membrane of ileum enterocytes (at protein level). Mainly expressed in the distal small intestine.

The protein resides in the apical cell membrane. Its function is as follows. Aminopeptidase with broad substrate specificity. Has lower activity with substrates that have Asp or Glu in the P2' position, or Pro in the P3' position. Lacks activity with substrates that have both Pro in the P3' position and Asp or Glu in the P2' position. Lacks carboxypeptidase activity. Lacks dipeptidyl-peptidase IV type activity. The chain is Aminopeptidase NAALADL1 (Naaladl1) from Rattus norvegicus (Rat).